The following is a 263-amino-acid chain: MPEGPEIRRAADNLEAAIKGKPLTDVWFAFPQLKTYQSQLIGQHVTHVETRGKALLTHFSNDLTLYSHNQLYGVWRVVDTGEEPQTTRVLRVKLQTADKTILLYSASDIEMLRPEQLTTHPFLQRVGPDVLDPNLTPEVVKERLLSPRFRNRQFAGLLLDQAFLAGLGNYLRVEILWQVGLTGNHKAKDLNAAQLDALAHALLEIPRFSYATRGQVDENKHHGALFRFKVFHRDGELCERCGGIIEKTTLSSRPFYWCPGCQH.

The Schiff-base intermediate with DNA role is filled by Pro-2. The Proton donor role is filled by Glu-3. Lys-53 serves as the catalytic Proton donor; for beta-elimination activity. DNA is bound by residues Gln-70, Arg-125, and Asn-169. An FPG-type zinc finger spans residues 229-263 (KVFHRDGELCERCGGIIEKTTLSSRPFYWCPGCQH). The Proton donor; for delta-elimination activity role is filled by Arg-253.

It belongs to the FPG family. The cofactor is Zn(2+).

The catalysed reaction is 2'-deoxyribonucleotide-(2'-deoxyribose 5'-phosphate)-2'-deoxyribonucleotide-DNA = a 3'-end 2'-deoxyribonucleotide-(2,3-dehydro-2,3-deoxyribose 5'-phosphate)-DNA + a 5'-end 5'-phospho-2'-deoxyribonucleoside-DNA + H(+). Its function is as follows. Involved in base excision repair of DNA damaged by oxidation or by mutagenic agents. Acts as a DNA glycosylase that recognizes and removes damaged bases. Has a preference for oxidized pyrimidines, such as thymine glycol, 5,6-dihydrouracil and 5,6-dihydrothymine. Has AP (apurinic/apyrimidinic) lyase activity and introduces nicks in the DNA strand. Cleaves the DNA backbone by beta-delta elimination to generate a single-strand break at the site of the removed base with both 3'- and 5'-phosphates. In Escherichia coli (strain SE11), this protein is Endonuclease 8.